We begin with the raw amino-acid sequence, 265 residues long: Serine protease harobin (265 aa).

The first 18 residues, methionine 1 to glycine 18, serve as a signal peptide directing secretion. Residues lysine 19 to arginine 33 constitute a propeptide that is removed on maturation. Residues isoleucine 34–alanine 257 enclose the Peptidase S1 domain. 7 cysteine pairs are disulfide-bonded: cysteine 40/cysteine 172, cysteine 59/cysteine 75, cysteine 106/cysteine 152, cysteine 107/cysteine 264, cysteine 151/cysteine 218, cysteine 183/cysteine 197, and cysteine 208/cysteine 233. The active-site Charge relay system is the histidine 74. Residue asparagine 112 is glycosylated (N-linked (GlcNAc...) asparagine). Catalysis depends on aspartate 119, which acts as the Charge relay system. An N-linked (GlcNAc...) asparagine glycan is attached at asparagine 130. Serine 212 acts as the Charge relay system in catalysis.

Belongs to the peptidase S1 family. Snake venom subfamily. As to quaternary structure, monomer. Harobin contains three additional Cys residues than other snake venom serine proteases, suggesting an additional disulfide bond. In addition, it is more stable than other snake 6-disulfide-bond serine proteases, since it is less sensitive to DTT. As to expression, expressed by the venom gland.

Its subcellular location is the secreted. With respect to regulation, inhibited by PMSF. Functionally, serine protein with fibrinolytic and fibrinogenolytic activities. Degrades Bbeta-chain (FGB) of fibrinogen first and then the Aalpha-chain (FGA). Gamma-chain (FGG) are also digested on prolonged incubation. In vitro, it cleaves high molecular weight (HMW) kininogen (KNG) releasing bradykinin that promotes vasodilation. In vitro and in vivo, it cleaves angiotensin-2 (AGT). This explains the reduction of blood pressure in hypertensive rats. Also has antithrombotic effects on thrombosis animal models. This chain is Serine protease harobin, found in Hydrophis hardwickii (Hardwick's spine-bellied seasnake).